The following is a 388-amino-acid chain: Chorismate synthase (388 aa).

Positions 39 and 45 each coordinate NADP(+). FMN is bound by residues 130 to 132 (RSS), 251 to 252 (NA), glycine 296, 311 to 315 (KPIPT), and arginine 337.

Belongs to the chorismate synthase family. As to quaternary structure, homotetramer. Requires FMNH2 as cofactor.

It carries out the reaction 5-O-(1-carboxyvinyl)-3-phosphoshikimate = chorismate + phosphate. Its pathway is metabolic intermediate biosynthesis; chorismate biosynthesis; chorismate from D-erythrose 4-phosphate and phosphoenolpyruvate: step 7/7. In terms of biological role, catalyzes the anti-1,4-elimination of the C-3 phosphate and the C-6 proR hydrogen from 5-enolpyruvylshikimate-3-phosphate (EPSP) to yield chorismate, which is the branch point compound that serves as the starting substrate for the three terminal pathways of aromatic amino acid biosynthesis. This reaction introduces a second double bond into the aromatic ring system. This chain is Chorismate synthase, found in Geobacillus thermodenitrificans (strain NG80-2).